Here is a 956-residue protein sequence, read N- to C-terminus: uncharacterized protein (956 aa).

Residues 918 to 942 are a coiled coil; that stretch reads NSINEAIEKLNEAADAYQAIIDQQK.

This is an uncharacterized protein from Acanthamoeba polyphaga (Amoeba).